Reading from the N-terminus, the 679-residue chain is WD repeat-containing protein 48 homolog (679 aa).

8 WD repeats span residues 26 to 65 (QHRN…NEKY), 71 to 110 (HHND…CMST), 113 to 152 (THRD…ALTA), 164 to 203 (GSKD…RSMK), 206 to 245 (GHTE…CIQT), 248 to 287 (VHKE…NKML), 290 to 329 (EEKA…RCVL), and 349 to 388 (KGGA…KKEE). The disordered stretch occupies residues 594-615 (PSAGNANNSLQNSQSDANSEGS).

Belongs to the WD repeat WDR48 family. In terms of assembly, catalytic component of the Usp12-46 deubiquitylase complex consisting of Usp12-46, Wdr20 and Uaf1; regulatory subunit that, together wtih Wdr20, stabilizes Usp12-46. The Usp12-46 deubiquitylase complex associates with arr/arrow; the interaction leads to deubiquitination and stabilization of arr/arrow.

Its function is as follows. Regulatory component of the Usp12-46 deubiquitylase complex. activates deubiquitination by increasing the catalytic turnover without increasing the affinity of deubiquitinating enzymes for the substrate. The complex deubiquitylates the wg/wingless-signaling receptor arr/arrow, which stabilizes the receptor and increases its concentration at the cell surface; this enhances the sensitivity of cells to wg/wingless-signal stimulation. This increases the amplitude and spatial range of the signaling response to the wg/wingless morphogen gradient, facilitating the precise concentration-dependent regulation of its target genes. Together with Wdr20 and Usp12-46 required for wg/wingless-mediated signaling in the wing imaginal disc and for wg/wingless-dependent regulation of intestinal stem cell proliferation. In Drosophila mojavensis (Fruit fly), this protein is WD repeat-containing protein 48 homolog.